A 197-amino-acid polypeptide reads, in one-letter code: ATP-dependent Clp protease proteolytic subunit (197 aa).

The active-site Nucleophile is the serine 100. Histidine 125 is an active-site residue.

The protein belongs to the peptidase S14 family. Component of the chloroplastic Clp protease core complex.

It is found in the plastid. The protein localises to the chloroplast stroma. The catalysed reaction is Hydrolysis of proteins to small peptides in the presence of ATP and magnesium. alpha-casein is the usual test substrate. In the absence of ATP, only oligopeptides shorter than five residues are hydrolyzed (such as succinyl-Leu-Tyr-|-NHMec, and Leu-Tyr-Leu-|-Tyr-Trp, in which cleavage of the -Tyr-|-Leu- and -Tyr-|-Trp bonds also occurs).. In terms of biological role, cleaves peptides in various proteins in a process that requires ATP hydrolysis. Has a chymotrypsin-like activity. Plays a major role in the degradation of misfolded proteins. The protein is ATP-dependent Clp protease proteolytic subunit of Angiopteris evecta (Mule's foot fern).